Consider the following 213-residue polypeptide: Orotate phosphoribosyltransferase (213 aa).

A 5-phospho-alpha-D-ribose 1-diphosphate-binding site is contributed by K25. Orotate is bound at residue 33–34; that stretch reads FF. Residues 71–72, R98, K99, K102, H104, and 124–132 contribute to the 5-phospho-alpha-D-ribose 1-diphosphate site; these read YK and DDVITSGTA. Positions 128 and 156 each coordinate orotate.

Belongs to the purine/pyrimidine phosphoribosyltransferase family. PyrE subfamily. In terms of assembly, homodimer. It depends on Mg(2+) as a cofactor.

It catalyses the reaction orotidine 5'-phosphate + diphosphate = orotate + 5-phospho-alpha-D-ribose 1-diphosphate. Its pathway is pyrimidine metabolism; UMP biosynthesis via de novo pathway; UMP from orotate: step 1/2. In terms of biological role, catalyzes the transfer of a ribosyl phosphate group from 5-phosphoribose 1-diphosphate to orotate, leading to the formation of orotidine monophosphate (OMP). The sequence is that of Orotate phosphoribosyltransferase from Buchnera aphidicola subsp. Acyrthosiphon pisum (strain 5A).